The chain runs to 139 residues: MKKGTVLNSDISSVISRLGHTDTLVVCDAGLPIPKSTTRIDMALTQGVPSFMQVLGVVTNEMQVEAVIIAEEIKQHNPQLHETLLTHLEQLQKHQGNTIEIRYTTHEQFKQQTAESQAVIRSGECSPYANIILCAGVTF.

The active-site Proton donor is histidine 20. Substrate is bound by residues aspartate 28, histidine 106, and 128 to 130 (YAN).

This sequence belongs to the RbsD / FucU family. RbsD subfamily. Homodecamer.

It localises to the cytoplasm. The catalysed reaction is beta-D-ribopyranose = beta-D-ribofuranose. It participates in carbohydrate metabolism; D-ribose degradation; D-ribose 5-phosphate from beta-D-ribopyranose: step 1/2. In terms of biological role, catalyzes the interconversion of beta-pyran and beta-furan forms of D-ribose. The protein is D-ribose pyranase of Escherichia coli O6:H1 (strain CFT073 / ATCC 700928 / UPEC).